We begin with the raw amino-acid sequence, 421 residues long: Adenylosuccinate synthetase (421 aa).

GTP is bound by residues 11 to 17 (GDEGKGK) and 39 to 41 (GHT). D12 functions as the Proton acceptor in the catalytic mechanism. Residues D12 and G39 each contribute to the Mg(2+) site. IMP contacts are provided by residues 12 to 15 (DEGK), 37 to 40 (NAGH), T129, R143, N219, T234, and R298. H40 serves as the catalytic Proton donor. 294 to 300 (VTTGRRR) is a substrate binding site. GTP-binding positions include R300, 326–328 (KLD), and 409–411 (GTG).

It belongs to the adenylosuccinate synthetase family. In terms of assembly, homodimer. The cofactor is Mg(2+).

It is found in the cytoplasm. The catalysed reaction is IMP + L-aspartate + GTP = N(6)-(1,2-dicarboxyethyl)-AMP + GDP + phosphate + 2 H(+). Its pathway is purine metabolism; AMP biosynthesis via de novo pathway; AMP from IMP: step 1/2. Functionally, plays an important role in the de novo pathway and in the salvage pathway of purine nucleotide biosynthesis. Catalyzes the first committed step in the biosynthesis of AMP from IMP. The sequence is that of Adenylosuccinate synthetase from Paracoccidioides brasiliensis (strain Pb03).